A 269-amino-acid chain; its full sequence is Hydroxyethylthiazole kinase (269 aa).

M42 lines the substrate pocket. ATP-binding residues include R118 and S164. Residue G191 coordinates substrate.

The protein belongs to the Thz kinase family. Mg(2+) serves as cofactor.

It carries out the reaction 5-(2-hydroxyethyl)-4-methylthiazole + ATP = 4-methyl-5-(2-phosphooxyethyl)-thiazole + ADP + H(+). It participates in cofactor biosynthesis; thiamine diphosphate biosynthesis; 4-methyl-5-(2-phosphoethyl)-thiazole from 5-(2-hydroxyethyl)-4-methylthiazole: step 1/1. Catalyzes the phosphorylation of the hydroxyl group of 4-methyl-5-beta-hydroxyethylthiazole (THZ). The polypeptide is Hydroxyethylthiazole kinase (Listeria monocytogenes serotype 4b (strain F2365)).